Reading from the N-terminus, the 284-residue chain is 2,3,4,5-tetrahydropyridine-2,6-dicarboxylate N-succinyltransferase (284 aa).

The substrate site is built by Arg-111 and Asp-148.

The protein belongs to the transferase hexapeptide repeat family. Homotrimer.

It is found in the cytoplasm. It carries out the reaction (S)-2,3,4,5-tetrahydrodipicolinate + succinyl-CoA + H2O = (S)-2-succinylamino-6-oxoheptanedioate + CoA. Its pathway is amino-acid biosynthesis; L-lysine biosynthesis via DAP pathway; LL-2,6-diaminopimelate from (S)-tetrahydrodipicolinate (succinylase route): step 1/3. This Brucella suis (strain ATCC 23445 / NCTC 10510) protein is 2,3,4,5-tetrahydropyridine-2,6-dicarboxylate N-succinyltransferase.